Reading from the N-terminus, the 392-residue chain is Protein FAM53C (392 aa).

N-acetylmethionine is present on methionine 1. Positions 77-120 (HLRPPSRGSSPKEQPLSQVLRPEPPDPEKLPVPPAPPSKRHCRS) are disordered. Residues 83-93 (RGSSPKEQPLS) show a composition bias toward polar residues. Phosphoserine is present on residues serine 122 and serine 162. Disordered stretches follow at residues 141–167 (LWTP…PKRV), 203–303 (SRPC…LDFD), and 340–364 (SASC…EGAV). The span at 203–215 (SRPCATSPQSGSW) shows a compositional bias: polar residues. Phosphoserine is present on residues serine 232, serine 234, serine 255, serine 273, and serine 299. The span at 241 to 256 (ASRFLPSARSSPASSP) shows a compositional bias: low complexity. Residues 278–303 (LDARKTGVKRRHEEDPRRLRPSLDFD) are compositionally biased toward basic and acidic residues.

Belongs to the FAM53 family.

The polypeptide is Protein FAM53C (Pongo abelii (Sumatran orangutan)).